Reading from the N-terminus, the 72-residue chain is Translation initiation factor IF-1 (72 aa).

The 72-residue stretch at 1 to 72 (MAGNDVIEIE…TKGRITYRHK (72 aa)) folds into the S1-like domain.

Belongs to the IF-1 family. In terms of assembly, component of the 30S ribosomal translation pre-initiation complex which assembles on the 30S ribosome in the order IF-2 and IF-3, IF-1 and N-formylmethionyl-tRNA(fMet); mRNA recruitment can occur at any time during PIC assembly.

The protein resides in the cytoplasm. Functionally, one of the essential components for the initiation of protein synthesis. Stabilizes the binding of IF-2 and IF-3 on the 30S subunit to which N-formylmethionyl-tRNA(fMet) subsequently binds. Helps modulate mRNA selection, yielding the 30S pre-initiation complex (PIC). Upon addition of the 50S ribosomal subunit IF-1, IF-2 and IF-3 are released leaving the mature 70S translation initiation complex. In Oenococcus oeni (strain ATCC BAA-331 / PSU-1), this protein is Translation initiation factor IF-1.